A 374-amino-acid polypeptide reads, in one-letter code: Gibberellin 3-beta-dioxygenase 1 (374 aa).

Residues Lys206–Pro307 enclose the Fe2OG dioxygenase domain. Positions 231, 233, and 288 each coordinate Fe cation. Arg298 is a catalytic residue. Arg298 is a binding site for 2-oxoglutarate.

It belongs to the iron/ascorbate-dependent oxidoreductase family. GA3OX subfamily. It depends on L-ascorbate as a cofactor. Fe(2+) serves as cofactor. As to expression, expressed in radicles, roots, internodes, cotyledons, leaves and shoots. Barely detected in developing seeds. Not detected in flowers or young fruits.

The enzyme catalyses gibberellin A20 + 2-oxoglutarate + O2 = gibberellin A1 + succinate + CO2. It functions in the pathway plant hormone biosynthesis; gibberellin biosynthesis. Converts the inactive gibberellin (GA) precursors GA9 and GA20 in the bioactives gibberellins GA4 and GA1. Has a small activity on GA29, producing GA8. Unable to convert GA20 to GA5, GA5 to GA3 or GA12 to GA14. Involved in the production of bioactive GA for vegetative growth and development, but not for the 3-beta-hydroxylation of GA in developing seeds. The protein is Gibberellin 3-beta-dioxygenase 1 (LE) of Pisum sativum (Garden pea).